The following is a 66-amino-acid chain: Small ribosomal subunit protein eS27 (66 aa).

Zn(2+) contacts are provided by Cys21, Cys24, Cys40, and Cys43. A C4-type zinc finger spans residues 21-43 (CPVCGNEQVIFSHATFPARCLVC).

This sequence belongs to the eukaryotic ribosomal protein eS27 family. Part of the 30S ribosomal subunit. Zn(2+) is required as a cofactor.

The polypeptide is Small ribosomal subunit protein eS27 (Hyperthermus butylicus (strain DSM 5456 / JCM 9403 / PLM1-5)).